Here is a 790-residue protein sequence, read N- to C-terminus: Cadherin-6 (790 aa).

A signal peptide spans Met-1 to Pro-18. Residues Thr-19–Arg-53 constitute a propeptide that is removed on maturation. Asn-49 carries an N-linked (GlcNAc...) asparagine glycan. Cadherin domains are found at residues Ser-54 to Phe-159, Thr-160 to Phe-268, Pro-269 to Phe-383, Ser-384 to Pro-486, and Glu-487 to Pro-608. The Extracellular portion of the chain corresponds to Ser-54–Ala-615. N-linked (GlcNAc...) asparagine glycosylation is present at Asn-255. Residues Thr-259 to Gly-288 are disordered. The segment covering Pro-269–Glu-279 has biased composition (polar residues). N-linked (GlcNAc...) asparagine glycans are attached at residues Asn-399, Asn-437, Asn-455, and Asn-536. A helical transmembrane segment spans residues Leu-616–Leu-636. At Arg-637–Ser-790 the chain is on the cytoplasmic side. 2 positions are modified to phosphoserine: Ser-786 and Ser-790.

Highly expressed in brain, cerebellum, and kidney. Lung, pancreas, and gastric mucosa show a weak expression. Also expressed in certain liver and kidney carcinomas.

The protein resides in the cell membrane. In terms of biological role, cadherins are calcium-dependent cell adhesion proteins. They preferentially interact with themselves in a homophilic manner in connecting cells; cadherins may thus contribute to the sorting of heterogeneous cell types. In Homo sapiens (Human), this protein is Cadherin-6 (CDH6).